A 238-amino-acid chain; its full sequence is Lactate utilization protein A (238 aa).

It belongs to the LutA/YkgE family.

Is essential for L-lactate degradation and allows cells to grow with lactate as the sole carbon source. May also allow cells to utilize an alternative carbon source during biofilm formation, since it contributes to the formation of architecturally complex communities when lactate is present. This Bacillus subtilis (strain 168) protein is Lactate utilization protein A (lutA).